We begin with the raw amino-acid sequence, 127 residues long: Small ribosomal subunit protein uS11 (127 aa).

It belongs to the universal ribosomal protein uS11 family. As to quaternary structure, part of the 30S ribosomal subunit. Interacts with proteins S7 and S18. Binds to IF-3.

In terms of biological role, located on the platform of the 30S subunit, it bridges several disparate RNA helices of the 16S rRNA. Forms part of the Shine-Dalgarno cleft in the 70S ribosome. The polypeptide is Small ribosomal subunit protein uS11 (Rickettsia africae (strain ESF-5)).